The following is a 192-amino-acid chain: 3-hydroxyanthranilate 3,4-dioxygenase 1 (192 aa).

Residue Arg-50 coordinates O2. Residues His-54, Glu-60, and His-102 each coordinate Fe cation. Glu-60 lines the substrate pocket. Substrate is bound by residues Arg-106 and Glu-116. A divalent metal cation contacts are provided by Cys-131, Cys-134, Cys-168, and Cys-171.

The protein belongs to the 3-HAO family. The cofactor is Fe(2+).

The protein localises to the cytoplasm. It carries out the reaction 3-hydroxyanthranilate + O2 = (2Z,4Z)-2-amino-3-carboxymuconate 6-semialdehyde. The protein operates within cofactor biosynthesis; NAD(+) biosynthesis; quinolinate from L-kynurenine: step 3/3. In terms of biological role, catalyzes the oxidative ring opening of 3-hydroxyanthranilate to 2-amino-3-carboxymuconate semialdehyde, which spontaneously cyclizes to quinolinate. This chain is 3-hydroxyanthranilate 3,4-dioxygenase 1 (bna1-1), found in Aspergillus fumigatus (strain CBS 144.89 / FGSC A1163 / CEA10) (Neosartorya fumigata).